The chain runs to 66 residues: Small ribosomal subunit protein bS21 (66 aa).

It belongs to the bacterial ribosomal protein bS21 family.

The sequence is that of Small ribosomal subunit protein bS21 from Persephonella marina (strain DSM 14350 / EX-H1).